Consider the following 119-residue polypeptide: Large ribosomal subunit protein bL20c (119 aa).

The protein belongs to the bacterial ribosomal protein bL20 family.

The protein localises to the plastid. It is found in the chloroplast. In terms of biological role, binds directly to 23S ribosomal RNA and is necessary for the in vitro assembly process of the 50S ribosomal subunit. It is not involved in the protein synthesizing functions of that subunit. In Lolium perenne (Perennial ryegrass), this protein is Large ribosomal subunit protein bL20c.